A 142-amino-acid polypeptide reads, in one-letter code: Transcriptional regulator MraZ (142 aa).

2 SpoVT-AbrB domains span residues 5 to 47 (THTP…PTPE) and 76 to 119 (AHDE…DRVA).

This sequence belongs to the MraZ family. Forms oligomers.

The protein resides in the cytoplasm. Its subcellular location is the nucleoid. The protein is Transcriptional regulator MraZ of Salinispora tropica (strain ATCC BAA-916 / DSM 44818 / JCM 13857 / NBRC 105044 / CNB-440).